The sequence spans 49 residues: Large ribosomal subunit protein eL40 (49 aa).

The protein belongs to the eukaryotic ribosomal protein eL40 family.

The protein is Large ribosomal subunit protein eL40 of Methanosarcina acetivorans (strain ATCC 35395 / DSM 2834 / JCM 12185 / C2A).